The primary structure comprises 382 residues: Lipid-A-disaccharide synthase (382 aa).

Belongs to the LpxB family.

It catalyses the reaction a lipid X + a UDP-2-N,3-O-bis[(3R)-3-hydroxyacyl]-alpha-D-glucosamine = a lipid A disaccharide + UDP + H(+). It participates in bacterial outer membrane biogenesis; LPS lipid A biosynthesis. Its function is as follows. Condensation of UDP-2,3-diacylglucosamine and 2,3-diacylglucosamine-1-phosphate to form lipid A disaccharide, a precursor of lipid A, a phosphorylated glycolipid that anchors the lipopolysaccharide to the outer membrane of the cell. The protein is Lipid-A-disaccharide synthase of Koribacter versatilis (strain Ellin345).